A 412-amino-acid polypeptide reads, in one-letter code: Argininosuccinate synthase (412 aa).

Residues 20–28 (AYSGGLDTS) and alanine 48 each bind ATP. L-citrulline is bound by residues tyrosine 100 and serine 105. Glycine 130 contacts ATP. Threonine 132, asparagine 136, and aspartate 137 together coordinate L-aspartate. Asparagine 136 lines the L-citrulline pocket. Positions 140, 189, 198, 274, and 286 each coordinate L-citrulline.

This sequence belongs to the argininosuccinate synthase family. Type 1 subfamily. Homotetramer.

The protein resides in the cytoplasm. It carries out the reaction L-citrulline + L-aspartate + ATP = 2-(N(omega)-L-arginino)succinate + AMP + diphosphate + H(+). The protein operates within amino-acid biosynthesis; L-arginine biosynthesis; L-arginine from L-ornithine and carbamoyl phosphate: step 2/3. This Shewanella pealeana (strain ATCC 700345 / ANG-SQ1) protein is Argininosuccinate synthase.